We begin with the raw amino-acid sequence, 301 residues long: Acetyl-coenzyme A carboxylase carboxyl transferase subunit beta (301 aa).

The CoA carboxyltransferase N-terminal domain occupies 25–294 (LWIKCPETGE…SAANDVTRGA (270 aa)).

This sequence belongs to the AccD/PCCB family. In terms of assembly, acetyl-CoA carboxylase is a heterohexamer composed of biotin carboxyl carrier protein (AccB), biotin carboxylase (AccC) and two subunits each of ACCase subunit alpha (AccA) and ACCase subunit beta (AccD).

Its subcellular location is the cytoplasm. The catalysed reaction is N(6)-carboxybiotinyl-L-lysyl-[protein] + acetyl-CoA = N(6)-biotinyl-L-lysyl-[protein] + malonyl-CoA. Its pathway is lipid metabolism; malonyl-CoA biosynthesis; malonyl-CoA from acetyl-CoA: step 1/1. In terms of biological role, component of the acetyl coenzyme A carboxylase (ACC) complex. Biotin carboxylase (BC) catalyzes the carboxylation of biotin on its carrier protein (BCCP) and then the CO(2) group is transferred by the transcarboxylase to acetyl-CoA to form malonyl-CoA. The sequence is that of Acetyl-coenzyme A carboxylase carboxyl transferase subunit beta from Rhizobium etli (strain ATCC 51251 / DSM 11541 / JCM 21823 / NBRC 15573 / CFN 42).